The sequence spans 582 residues: Probable DNA ligase (582 aa).

An ATP-binding site is contributed by Glu248. Lys250 (N6-AMP-lysine intermediate) is an active-site residue. ATP contacts are provided by Arg255, Arg270, Glu299, Phe339, Arg416, and Lys422.

Belongs to the ATP-dependent DNA ligase family. Mg(2+) is required as a cofactor.

The enzyme catalyses ATP + (deoxyribonucleotide)n-3'-hydroxyl + 5'-phospho-(deoxyribonucleotide)m = (deoxyribonucleotide)n+m + AMP + diphosphate.. Functionally, DNA ligase that seals nicks in double-stranded DNA during DNA replication, DNA recombination and DNA repair. The sequence is that of Probable DNA ligase from Persephonella marina (strain DSM 14350 / EX-H1).